We begin with the raw amino-acid sequence, 635 residues long: UvrABC system protein C (635 aa).

The GIY-YIG domain maps to 20–97 (ERSGVYRMFD…IKKFQPKFNI (78 aa)). A UVR domain is found at 207 to 242 (KELQENLSKKMEELSEQMRFEEAAEIRDRIKALSYV).

Belongs to the UvrC family. As to quaternary structure, interacts with UvrB in an incision complex.

Its subcellular location is the cytoplasm. In terms of biological role, the UvrABC repair system catalyzes the recognition and processing of DNA lesions. UvrC both incises the 5' and 3' sides of the lesion. The N-terminal half is responsible for the 3' incision and the C-terminal half is responsible for the 5' incision. This is UvrABC system protein C from Rickettsia bellii (strain RML369-C).